The primary structure comprises 131 residues: UPF0102 protein RALTA_A3032 (131 aa).

Residues M1 to S12 are compositionally biased toward polar residues. The disordered stretch occupies residues M1–E21.

The protein belongs to the UPF0102 family.

This chain is UPF0102 protein RALTA_A3032, found in Cupriavidus taiwanensis (strain DSM 17343 / BCRC 17206 / CCUG 44338 / CIP 107171 / LMG 19424 / R1) (Ralstonia taiwanensis (strain LMG 19424)).